The chain runs to 125 residues: Small ribosomal subunit protein uS13 (125 aa).

Residues 94-125 form a disordered region; that stretch reads SLPVRGQRTQTNARTRKGKRKTVAGKKKAVKK. Positions 107-125 are enriched in basic residues; sequence RTRKGKRKTVAGKKKAVKK.

It belongs to the universal ribosomal protein uS13 family. In terms of assembly, part of the 30S ribosomal subunit. Forms a loose heterodimer with protein S19. Forms two bridges to the 50S subunit in the 70S ribosome.

Its function is as follows. Located at the top of the head of the 30S subunit, it contacts several helices of the 16S rRNA. In the 70S ribosome it contacts the 23S rRNA (bridge B1a) and protein L5 of the 50S subunit (bridge B1b), connecting the 2 subunits; these bridges are implicated in subunit movement. Contacts the tRNAs in the A and P-sites. This Prosthecochloris aestuarii (strain DSM 271 / SK 413) protein is Small ribosomal subunit protein uS13.